We begin with the raw amino-acid sequence, 268 residues long: Thiazole synthase (268 aa).

K100 (schiff-base intermediate with DXP) is an active-site residue. 1-deoxy-D-xylulose 5-phosphate-binding positions include G161, 187–188 (AG), and 209–210 (NT). The interval 248 to 268 (ATPSSPSEGMITGSPHSAANN) is disordered.

The protein belongs to the ThiG family. In terms of assembly, homotetramer. Forms heterodimers with either ThiH or ThiS.

The protein localises to the cytoplasm. It carries out the reaction [ThiS sulfur-carrier protein]-C-terminal-Gly-aminoethanethioate + 2-iminoacetate + 1-deoxy-D-xylulose 5-phosphate = [ThiS sulfur-carrier protein]-C-terminal Gly-Gly + 2-[(2R,5Z)-2-carboxy-4-methylthiazol-5(2H)-ylidene]ethyl phosphate + 2 H2O + H(+). Its pathway is cofactor biosynthesis; thiamine diphosphate biosynthesis. Its function is as follows. Catalyzes the rearrangement of 1-deoxy-D-xylulose 5-phosphate (DXP) to produce the thiazole phosphate moiety of thiamine. Sulfur is provided by the thiocarboxylate moiety of the carrier protein ThiS. In vitro, sulfur can be provided by H(2)S. This Nitrosomonas eutropha (strain DSM 101675 / C91 / Nm57) protein is Thiazole synthase.